A 360-amino-acid chain; its full sequence is Phospho-N-acetylmuramoyl-pentapeptide-transferase (360 aa).

Transmembrane regions (helical) follow at residues 27-47, 73-93, 97-117, 145-165, 168-188, 199-219, 236-256, 263-283, 288-308, and 337-357; these read ILGV…VIVL, TMGG…WGDL, YVWV…VDDY, AFYL…VPLF, VAIP…VGTS, GLAI…AYLT, SGEL…FLWF, IFMG…IAVI, LVLF…ILQV, and KVIV…FATL.

Belongs to the glycosyltransferase 4 family. MraY subfamily. Mg(2+) is required as a cofactor.

It is found in the cell inner membrane. The enzyme catalyses UDP-N-acetyl-alpha-D-muramoyl-L-alanyl-gamma-D-glutamyl-meso-2,6-diaminopimeloyl-D-alanyl-D-alanine + di-trans,octa-cis-undecaprenyl phosphate = di-trans,octa-cis-undecaprenyl diphospho-N-acetyl-alpha-D-muramoyl-L-alanyl-D-glutamyl-meso-2,6-diaminopimeloyl-D-alanyl-D-alanine + UMP. It participates in cell wall biogenesis; peptidoglycan biosynthesis. Its function is as follows. Catalyzes the initial step of the lipid cycle reactions in the biosynthesis of the cell wall peptidoglycan: transfers peptidoglycan precursor phospho-MurNAc-pentapeptide from UDP-MurNAc-pentapeptide onto the lipid carrier undecaprenyl phosphate, yielding undecaprenyl-pyrophosphoryl-MurNAc-pentapeptide, known as lipid I. In Marinomonas sp. (strain MWYL1), this protein is Phospho-N-acetylmuramoyl-pentapeptide-transferase.